The chain runs to 374 residues: Putative L-lysine 2,3-aminomutase aq_1632 (374 aa).

Residues 86–314 form the Radical SAM core domain; the sequence is HKYPDTALLL…ARVRYVMSHE (229 aa). [4Fe-4S] cluster contacts are provided by Cys100, Cys104, and Cys107. Lys317 bears the N6-(pyridoxal phosphate)lysine mark.

It belongs to the radical SAM superfamily. KamA family. Requires [4Fe-4S] cluster as cofactor. Pyridoxal 5'-phosphate serves as cofactor.

This is Putative L-lysine 2,3-aminomutase aq_1632 from Aquifex aeolicus (strain VF5).